The chain runs to 159 residues: 2-C-methyl-D-erythritol 2,4-cyclodiphosphate synthase (159 aa).

The a divalent metal cation site is built by Asp-10 and His-12. 4-CDP-2-C-methyl-D-erythritol 2-phosphate contacts are provided by residues 10–12 (DVH) and 36–37 (HS). His-44 lines the a divalent metal cation pocket. 4-CDP-2-C-methyl-D-erythritol 2-phosphate is bound by residues 58–60 (DIG), 134–137 (TTTE), Phe-141, and Arg-144.

It belongs to the IspF family. As to quaternary structure, homotrimer. Requires a divalent metal cation as cofactor.

It catalyses the reaction 4-CDP-2-C-methyl-D-erythritol 2-phosphate = 2-C-methyl-D-erythritol 2,4-cyclic diphosphate + CMP. It participates in isoprenoid biosynthesis; isopentenyl diphosphate biosynthesis via DXP pathway; isopentenyl diphosphate from 1-deoxy-D-xylulose 5-phosphate: step 4/6. In terms of biological role, involved in the biosynthesis of isopentenyl diphosphate (IPP) and dimethylallyl diphosphate (DMAPP), two major building blocks of isoprenoid compounds. Catalyzes the conversion of 4-diphosphocytidyl-2-C-methyl-D-erythritol 2-phosphate (CDP-ME2P) to 2-C-methyl-D-erythritol 2,4-cyclodiphosphate (ME-CPP) with a corresponding release of cytidine 5-monophosphate (CMP). The sequence is that of 2-C-methyl-D-erythritol 2,4-cyclodiphosphate synthase from Bacteroides fragilis (strain ATCC 25285 / DSM 2151 / CCUG 4856 / JCM 11019 / LMG 10263 / NCTC 9343 / Onslow / VPI 2553 / EN-2).